The sequence spans 356 residues: Zinc finger CCCH domain-containing protein 49 (356 aa).

C3H1-type zinc fingers lie at residues 120–146 (YSGT…HGVF) and 155–177 (YRTQ…AHSP). A disordered region spans residues 209 to 235 (ISPVSGSPPMSPRADSESSPMTQSLSR). The span at 225-235 (ESSPMTQSLSR) shows a compositional bias: polar residues.

The sequence is that of Zinc finger CCCH domain-containing protein 49 from Arabidopsis thaliana (Mouse-ear cress).